Consider the following 181-residue polypeptide: Akirin-2 (181 aa).

A disordered region spans residues 18-48; the sequence is SPAASPKRRRCAPLSPSGPSPQKYLRLEPSP. The Nuclear localization signal signature appears at 23–28; sequence PKRRRC. The SYVS motif signature appears at 178 to 181; it reads SYVS.

This sequence belongs to the akirin family. Homodimer. Interacts with actl6a/baf53a. Interacts with gmnn.

It is found in the nucleus. Its function is as follows. Molecular adapter that acts as a bridge between a variety of multiprotein complexes, and which is involved in embryonic development, immunity, myogenesis and brain development. Plays a key role in nuclear protein degradation by promoting import of proteasomes into the nucleus: acts by bridging fully assembled 20S proteasomes with nuclear import receptor ipo9. Involved in both neural precursor maintenance and terminal neural differentiation: bridges gmnn and actl6a/baf53a in neural progenitor cells, antagonizing the activity of gmnn, thereby suppressing sox2 expression. Also required for proper activation of neurod1 and neuronal differentiation. Involved in myogenesis: required for skeletal muscle formation and skeletal development, possibly by regulating expression of muscle differentiation factors. This chain is Akirin-2, found in Xenopus laevis (African clawed frog).